A 219-amino-acid polypeptide reads, in one-letter code: Elongation factor Ts, chloroplastic (219 aa).

The protein belongs to the EF-Ts family.

The protein resides in the plastid. It localises to the chloroplast. Associates with the EF-Tu.GDP complex and induces the exchange of GDP to GTP. It remains bound to the aminoacyl-tRNA.EF-Tu.GTP complex up to the GTP hydrolysis stage on the ribosome. The chain is Elongation factor Ts, chloroplastic (tsf) from Rhodomonas salina (Cryptomonas salina).